A 206-amino-acid chain; its full sequence is Large ribosomal subunit protein uL4 (206 aa).

The segment covering 43–52 (NKRQGTQSAK) has biased composition (polar residues). The interval 43-86 (NKRQGTQSAKTRAEVSGGGRKPWRQKGTGHARQGSTRSPQWKGG) is disordered.

This sequence belongs to the universal ribosomal protein uL4 family. Part of the 50S ribosomal subunit.

One of the primary rRNA binding proteins, this protein initially binds near the 5'-end of the 23S rRNA. It is important during the early stages of 50S assembly. It makes multiple contacts with different domains of the 23S rRNA in the assembled 50S subunit and ribosome. Its function is as follows. Forms part of the polypeptide exit tunnel. The polypeptide is Large ribosomal subunit protein uL4 (Lachnoclostridium phytofermentans (strain ATCC 700394 / DSM 18823 / ISDg) (Clostridium phytofermentans)).